Here is a 520-residue protein sequence, read N- to C-terminus: 2-isopropylmalate synthase (520 aa).

The 263-residue stretch at 12 to 274 (VVIFDTTLRD…DTGIDTTMLT (263 aa)) folds into the Pyruvate carboxyltransferase domain. The Mn(2+) site is built by Asp-21, His-209, His-211, and Asn-245. The regulatory domain stretch occupies residues 398 to 520 (KLLSLSVIAG…RLHAQHAAVV (123 aa)).

It belongs to the alpha-IPM synthase/homocitrate synthase family. LeuA type 1 subfamily. Homodimer. It depends on Mn(2+) as a cofactor.

It localises to the cytoplasm. The enzyme catalyses 3-methyl-2-oxobutanoate + acetyl-CoA + H2O = (2S)-2-isopropylmalate + CoA + H(+). It participates in amino-acid biosynthesis; L-leucine biosynthesis; L-leucine from 3-methyl-2-oxobutanoate: step 1/4. In terms of biological role, catalyzes the condensation of the acetyl group of acetyl-CoA with 3-methyl-2-oxobutanoate (2-ketoisovalerate) to form 3-carboxy-3-hydroxy-4-methylpentanoate (2-isopropylmalate). In Methylorubrum populi (strain ATCC BAA-705 / NCIMB 13946 / BJ001) (Methylobacterium populi), this protein is 2-isopropylmalate synthase.